The primary structure comprises 425 residues: Gamma-glutamyl phosphate reductase (425 aa).

This sequence belongs to the gamma-glutamyl phosphate reductase family.

The protein resides in the cytoplasm. The catalysed reaction is L-glutamate 5-semialdehyde + phosphate + NADP(+) = L-glutamyl 5-phosphate + NADPH + H(+). It functions in the pathway amino-acid biosynthesis; L-proline biosynthesis; L-glutamate 5-semialdehyde from L-glutamate: step 2/2. Functionally, catalyzes the NADPH-dependent reduction of L-glutamate 5-phosphate into L-glutamate 5-semialdehyde and phosphate. The product spontaneously undergoes cyclization to form 1-pyrroline-5-carboxylate. The polypeptide is Gamma-glutamyl phosphate reductase (Symbiobacterium thermophilum (strain DSM 24528 / JCM 14929 / IAM 14863 / T)).